The sequence spans 300 residues: UDP-3-O-acyl-N-acetylglucosamine deacetylase (300 aa).

Residues H78, H237, and D241 each contribute to the Zn(2+) site. H264 (proton donor) is an active-site residue.

The protein belongs to the LpxC family. The cofactor is Zn(2+).

The enzyme catalyses a UDP-3-O-[(3R)-3-hydroxyacyl]-N-acetyl-alpha-D-glucosamine + H2O = a UDP-3-O-[(3R)-3-hydroxyacyl]-alpha-D-glucosamine + acetate. Its pathway is glycolipid biosynthesis; lipid IV(A) biosynthesis; lipid IV(A) from (3R)-3-hydroxytetradecanoyl-[acyl-carrier-protein] and UDP-N-acetyl-alpha-D-glucosamine: step 2/6. In terms of biological role, catalyzes the hydrolysis of UDP-3-O-myristoyl-N-acetylglucosamine to form UDP-3-O-myristoylglucosamine and acetate, the committed step in lipid A biosynthesis. This is UDP-3-O-acyl-N-acetylglucosamine deacetylase from Acinetobacter baumannii (strain SDF).